A 464-amino-acid chain; its full sequence is Arginine biosynthesis bifunctional protein ArgJ, mitochondrial (464 aa).

Residues T191, K220, T231, E318, N459, and T464 each contribute to the substrate site. Residue T231 is the Nucleophile of the active site.

It belongs to the ArgJ family. Heterodimer of an alpha and a beta chain. The alpha and beta chains are autoproteolytically processed from a single precursor protein within the mitochondrion.

It localises to the mitochondrion matrix. It carries out the reaction N(2)-acetyl-L-ornithine + L-glutamate = N-acetyl-L-glutamate + L-ornithine. The catalysed reaction is L-glutamate + acetyl-CoA = N-acetyl-L-glutamate + CoA + H(+). It participates in amino-acid biosynthesis; L-arginine biosynthesis; L-ornithine and N-acetyl-L-glutamate from L-glutamate and N(2)-acetyl-L-ornithine (cyclic): step 1/1. Its pathway is amino-acid biosynthesis; L-arginine biosynthesis; N(2)-acetyl-L-ornithine from L-glutamate: step 1/4. Functionally, catalyzes two activities which are involved in the cyclic version of arginine biosynthesis: the synthesis of acetylglutamate from glutamate and acetyl-CoA, and of ornithine by transacetylation between acetylornithine and glutamate. The chain is Arginine biosynthesis bifunctional protein ArgJ, mitochondrial from Pyricularia oryzae (strain 70-15 / ATCC MYA-4617 / FGSC 8958) (Rice blast fungus).